The sequence spans 579 residues: MIRTHEAGTLRADHAEQNVVLAGWVARRRDHGGVVFLDLRDASGIVQVVVREDELAHDLRSEYCIKVTGTVRIRPEGNENPDIATGEIEVVASHIEVLSESAPLPFPLDGNQEISEEARLRYRYLDMRRPETAEALRVRSRATYIAHEVMNDNGFVYVETPYLTRSTPEGARDFLVPVRLQPGHWYALPQSPQLFKQLLMVGGMERYYQLTRCFRDEDFRADRQPEFTQIDIEMSFVDEEDLFDIGEKLFTRLLREVRGVELPRPFRRMKFAEAMDRFGTDKPDLRFGQELVELTDFFANTPFRVFQAPYVGAVVMPGGASQTRRELDAWQEWARSRGAKGLAYVLVHEDGTLGGPVAKNLSEEERAGLAERVGAKPGDAIFFSAGERTASQELLGAARLEIGKRCGLIDESAWEVLWITDMPMFEKDDEGGWTSVHHPFTAPAQEVADTFHNDPGSATARAFDLVMNGYELASGSIRIHRAEMQQRVFDTIGLSKDEAETKFGFLLEAFQFGPPPHGGLAVGWDRLVMLLAGQSTIRDVIAFPKTASGADPLTGAPTPITAEQRREAGVDAVPEQATS.

Position 169 (E169) interacts with L-aspartate. The interval 193 to 196 (QLFK) is aspartate. L-aspartate is bound at residue R215. ATP is bound by residues 215 to 217 (RDE) and Q224. H437 serves as a coordination point for L-aspartate. Position 471 (E471) interacts with ATP. R478 is an L-aspartate binding site. 523 to 526 (GWDR) contacts ATP. Residues 551–579 (DPLTGAPTPITAEQRREAGVDAVPEQATS) form a disordered region.

This sequence belongs to the class-II aminoacyl-tRNA synthetase family. Type 1 subfamily. Homodimer.

The protein localises to the cytoplasm. It carries out the reaction tRNA(Asx) + L-aspartate + ATP = L-aspartyl-tRNA(Asx) + AMP + diphosphate. Functionally, aspartyl-tRNA synthetase with relaxed tRNA specificity since it is able to aspartylate not only its cognate tRNA(Asp) but also tRNA(Asn). Reaction proceeds in two steps: L-aspartate is first activated by ATP to form Asp-AMP and then transferred to the acceptor end of tRNA(Asp/Asn). This Thermobifida fusca (strain YX) protein is Aspartate--tRNA(Asp/Asn) ligase.